The chain runs to 713 residues: Ribosomal RNA large subunit methyltransferase K/L (713 aa).

The THUMP domain maps to 43 to 154; that stretch reads LLYRALLWSR…RDQVMLSLDL (112 aa).

This sequence belongs to the methyltransferase superfamily. RlmKL family.

The protein resides in the cytoplasm. It carries out the reaction guanosine(2445) in 23S rRNA + S-adenosyl-L-methionine = N(2)-methylguanosine(2445) in 23S rRNA + S-adenosyl-L-homocysteine + H(+). The catalysed reaction is guanosine(2069) in 23S rRNA + S-adenosyl-L-methionine = N(2)-methylguanosine(2069) in 23S rRNA + S-adenosyl-L-homocysteine + H(+). Functionally, specifically methylates the guanine in position 2445 (m2G2445) and the guanine in position 2069 (m7G2069) of 23S rRNA. The chain is Ribosomal RNA large subunit methyltransferase K/L from Sodalis glossinidius (strain morsitans).